The following is a 262-amino-acid chain: Lipoate-protein ligase A subunit 1 (262 aa).

A BPL/LPL catalytic domain is found at 30-226; sequence YGDKPILRFY…GFSETLHIDF (197 aa). ATP is bound by residues Arg-72, Gly-77, Tyr-80, Asp-85, Pro-132, and Lys-135. Mg(2+) is bound by residues Thr-137 and Asp-138. ATP-binding residues include Lys-145, Ala-149, and Ala-163. Residue Lys-145 coordinates (R)-lipoate. Ala-149 lines the Mg(2+) pocket.

The protein belongs to the LplA family. In terms of assembly, heterodimer composed of LplA and LplB.

It localises to the cytoplasm. The catalysed reaction is L-lysyl-[lipoyl-carrier protein] + (R)-lipoate + ATP = N(6)-[(R)-lipoyl]-L-lysyl-[lipoyl-carrier protein] + AMP + diphosphate + H(+). The protein operates within protein modification; protein lipoylation via exogenous pathway; protein N(6)-(lipoyl)lysine from lipoate: step 1/2. Its pathway is protein modification; protein lipoylation via exogenous pathway; protein N(6)-(lipoyl)lysine from lipoate: step 2/2. Its function is as follows. Part of a lipoate-protein ligase complex that catalyzes both the ATP-dependent activation of exogenously supplied lipoate to lipoyl-AMP and the transfer of the activated lipoyl onto the lipoyl domains of lipoate-dependent enzymes. Can also use octanoate as substrate. This is Lipoate-protein ligase A subunit 1 (lplA) from Thermoplasma acidophilum (strain ATCC 25905 / DSM 1728 / JCM 9062 / NBRC 15155 / AMRC-C165).